The primary structure comprises 1183 residues: Phospholipid-transporting ATPase FetA (1183 aa).

Transmembrane regions (helical) follow at residues 96 to 116 (ISSLAWYTTVIPLIVVLSITG), 299 to 319 (VLVVWIFMFLGGMCFLLSIGH), and 348 to 368 (ALIFWSYFIVLNTMVPISLYV). D416 acts as the 4-aspartylphosphate intermediate in catalysis. Residues D416, K417, T418, E519, F560, K583, R617, T697, G698, D699, R812, and K818 each contribute to the ATP site. D416 contacts Mg(2+). T418 is a Mg(2+) binding site. Mg(2+) is bound at residue D838. The ATP site is built by N841 and D842. Residue D842 coordinates Mg(2+). The next 6 helical transmembrane spans lie at 904 to 924 (FAFTLVHFWYAFFNGFSAQTV), 927 to 947 (IWFITFYNLIYTSLPVLGLSL), 981 to 1001 (CLLHGIYNSFVLFFVPMGTVF), 1014 to 1034 (FQSFSLLVQTTLIGVMTMQIA), 1049 to 1069 (WGSLGLYFCILILLCSDGLCL), and 1090 to 1110 (IWLCLILSTILCMIPLIGYNF).

The protein belongs to the cation transport ATPase (P-type) (TC 3.A.3) family. Type IV subfamily. The cofactor is Mg(2+). As to expression, highly expressed in testis.

The protein resides in the cytoplasmic vesicle. The protein localises to the secretory vesicle. It is found in the acrosome membrane. The enzyme catalyses ATP + H2O + phospholipidSide 1 = ADP + phosphate + phospholipidSide 2.. In terms of biological role, P4-ATPase flippase which catalyzes the hydrolysis of ATP coupled to the transport of aminophospholipids from the outer to the inner leaflet of various membranes and ensures the maintenance of asymmetric distribution of phospholipids. Phospholipid translocation also seems to be implicated in vesicle formation and in uptake of lipid signaling molecules. May play a role in phospholid transport across membranes and in acrosome formation. This Mus musculus (Mouse) protein is Phospholipid-transporting ATPase FetA (Atp8b5).